The following is a 554-amino-acid chain: (+)-delta-cadinene synthase isozyme XC1 (554 aa).

Residues 1–16 are compositionally biased toward low complexity; sequence MASQVSQMPSSSPLSS. The interval 1-23 is disordered; it reads MASQVSQMPSSSPLSSNKDEMRP. Mg(2+) is bound by residues Asp307, Asp311, Asp451, and Glu455. Positions 307-311 match the DDXXD motif motif; that stretch reads DDTYD.

It belongs to the terpene synthase family. It depends on Mg(2+) as a cofactor.

The enzyme catalyses (2E,6E)-farnesyl diphosphate = (1S,8aR)-delta-cadinene + diphosphate. Its pathway is secondary metabolite biosynthesis; terpenoid biosynthesis. Responsible for the cyclization of trans,trans-farnesyl diphosphate (FPP) to (+)-delta cadinene. In Gossypium arboreum (Tree cotton), this protein is (+)-delta-cadinene synthase isozyme XC1.